The sequence spans 643 residues: MPIITLPDGSQRQFDNPVSVMEVAQSIGAGLAKATIAGRVNGERRDACDIISEDSSLEIITAKDEDGLEIIRHSCAHLLGHAIKQLFPDVKMAIGPTIDNGFYYDVDLDRSLTQEDLDAIEKRMLELAKTNYDVVKKRVSWQEARDTFEKRGEPYKMAILDENIERTATPALYHHEEYIDMCRGPHVPNMRFCHHFKLQKVAGAYWRGDSKNKMLQRIYGTAWADKKQLAEYLTRLEEAAKRDHRRIGKALDLYHMQEEAPGLVFWHNDGWTIFRELETFVRTKLKEYDYQEVKGPFMMDRVLWERTGHWQNYADLMFTTQSENREYAIKPMNCPGHVQIFNQGLKSYRDLPIRMAEFGSCHRNEPSGSLHGLMRVRGFTQDDAHIFCTEDQIESEVTSCIRMVYDIYSTFGFSNIQVKLSTRPENRIGDDAMWDRAEDGLAKALTANGLSYEIQEGEGAFYGPKIEFALRDCLDREWQCGTIQLDFALPGRLDASYVAEDNGRRTPVMIHRAILGSIERFIGIITEEYAGFFPTWLAPTQAVVMNITDSQADYVQKVTKALSDAGIRAKSDLRNEKVGFKVREHTLRRVPYMLVCGDKEIEAGKVSVRTRKGADLGTFTIDEFVEILKNQVKARGLKLLGEE.

The 61-residue stretch at 1 to 61 (MPIITLPDGS…SEDSSLEIIT (61 aa)) folds into the TGS domain. Residues 243 to 534 (DHRRIGKALD…ITEEYAGFFP (292 aa)) are catalytic. 3 residues coordinate Zn(2+): Cys334, His385, and His511.

Belongs to the class-II aminoacyl-tRNA synthetase family. Homodimer. Zn(2+) serves as cofactor.

Its subcellular location is the cytoplasm. The enzyme catalyses tRNA(Thr) + L-threonine + ATP = L-threonyl-tRNA(Thr) + AMP + diphosphate + H(+). Catalyzes the attachment of threonine to tRNA(Thr) in a two-step reaction: L-threonine is first activated by ATP to form Thr-AMP and then transferred to the acceptor end of tRNA(Thr). Also edits incorrectly charged L-seryl-tRNA(Thr). This chain is Threonine--tRNA ligase, found in Actinobacillus pleuropneumoniae serotype 7 (strain AP76).